Reading from the N-terminus, the 110-residue chain is PHD finger-like domain-containing protein 5A (110 aa).

An N-acetylalanine modification is found at Ala-2. Lys-3 carries the post-translational modification N6-acetyllysine. 11 residues coordinate Zn(2+): Cys-11, Cys-23, Cys-26, Cys-30, Cys-33, Cys-46, Cys-49, Cys-58, Cys-61, Cys-72, and Cys-75. Positions 35-51 are interaction with SF3B1 and SF3B3; that stretch reads SYVRPCTLVRICDECNY. Residues 79–82 form an interaction with SF3B3 region; it reads EKDR. Cys-85 is a Zn(2+) binding site. The residue at position 94 (Ser-94) is a Phosphoserine.

Belongs to the PHF5 family. Component of the 17S U2 SnRNP complex, a ribonucleoprotein complex that contains small nuclear RNA (snRNA) U2 and a number of specific proteins. Part of the SF3B subcomplex of the 17S U2 SnRNP complex. SF3B associates with the splicing subcomplex SF3A and a 12S RNA unit to form the U2 small nuclear ribonucleoproteins complex (U2 snRNP). Within the SF3B complex interacts directly with SF3B1 and SF3B3. Component of the minor spliceosome, which splices U12-type introns. Within this complex, interacts with CRIPT. Interacts (via N-terminus) with U2AF1 and SRSF5; acts to bridge the two. Interacts (via C-terminus) with EP400 and DDX1; acts to bridge the two. Interacts with the PAF1 complex (PAF1C) composed of CDC73, PAF1, LEO1, CTR9, RTF1 and SKIC8. Within the PAF1C interacts directly with CDC73 and SKIC8. Interacts with RNA polymerase II. As to expression, expressed in primary spermatocytes (at protein level). Ubiquitously expressed in pre- and postnatal tissues. Highly expressed in pluripotent embryonic stem cells (ESCs) (at protein level) and induced pluripotent stem cells (iPSCs).

It is found in the nucleus. It localises to the nucleus speckle. Its function is as follows. Component of the 17S U2 SnRNP complex of the spliceosome, a large ribonucleoprotein complex that removes introns from transcribed pre-mRNAs. The 17S U2 SnRNP complex (1) directly participates in early spliceosome assembly and (2) mediates recognition of the intron branch site during pre-mRNA splicing by promoting the selection of the pre-mRNA branch-site adenosine, the nucleophile for the first step of splicing. Within the 17S U2 SnRNP complex, PHF5A is part of the SF3B subcomplex, which is required for 'A' complex assembly formed by the stable binding of U2 snRNP to the branchpoint sequence in pre-mRNA. Sequence independent binding of SF3A and SF3B subcomplexes upstream of the branch site is essential, it may anchor U2 snRNP to the pre-mRNA. Also acts as a component of the minor spliceosome, which is involved in the splicing of U12-type introns in pre-mRNAs. Also involved in elongation by RNA polymerase II as part of the PAF1 complex (PAF1C). PAF1C is required for maintenance of embryonic stem cell (ESC) self-renewal and cellular reprogramming of stem cells. Maintains pluripotency by recruiting and stabilizing PAF1C on pluripotency genes loci, and by regulating the expression of the pluripotency genes. Regulates the deposition of elongation-associated histone modifications, including dimethylated histone H3 'Lys-79' (H3K79me2) and trimethylated histone H3 'Lys-36' (H3K36me3), on PAF1C targets, self-renewal and pluripotency genes. Regulates RNA polymerase II promoter-proximal pause release of the PAF1C targets and self-renewal genes, and the levels of elongating ('Ser-2' phosphorylated) RNA polymerase II in their gene bodies. Regulates muscle specification in adult stem cells by stabilizing PAF1C in chromatin to promote myogenic differentiation. Acts as a transcriptional regulator by binding to the GJA1/Cx43 promoter and enhancing its up-regulation by ESR1/ER-alpha. This chain is PHD finger-like domain-containing protein 5A (Phf5a), found in Mus musculus (Mouse).